A 300-amino-acid chain; its full sequence is NAD kinase (300 aa).

Residue aspartate 75 is the Proton acceptor of the active site. Residues 75–76 (DG), 149–150 (ND), arginine 177, aspartate 179, 190–195 (TAYALS), alanine 214, and glutamine 248 contribute to the NAD(+) site.

It belongs to the NAD kinase family. It depends on a divalent metal cation as a cofactor.

Its subcellular location is the cytoplasm. The catalysed reaction is NAD(+) + ATP = ADP + NADP(+) + H(+). Functionally, involved in the regulation of the intracellular balance of NAD and NADP, and is a key enzyme in the biosynthesis of NADP. Catalyzes specifically the phosphorylation on 2'-hydroxyl of the adenosine moiety of NAD to yield NADP. In Burkholderia orbicola (strain MC0-3), this protein is NAD kinase.